Here is a 142-residue protein sequence, read N- to C-terminus: Large ribosomal subunit protein uL13 (142 aa).

Belongs to the universal ribosomal protein uL13 family. Part of the 50S ribosomal subunit.

In terms of biological role, this protein is one of the early assembly proteins of the 50S ribosomal subunit, although it is not seen to bind rRNA by itself. It is important during the early stages of 50S assembly. The chain is Large ribosomal subunit protein uL13 from Glaesserella parasuis serovar 5 (strain SH0165) (Haemophilus parasuis).